Reading from the N-terminus, the 402-residue chain is WAT1-related protein At5g07050 (402 aa).

10 consecutive transmembrane segments (helical) span residues 20–40, 48–68, 74–94, 109–129, 149–169, 196–216, 229–249, 266–286, 293–313, and 318–338; these read FAMI…KISL, VLVV…AFFF, PKIT…GPVI, TFSC…AVLF, VVTV…VELF, FLKG…LFVL, LSLT…VTFV, LAAA…QGIV, VFAT…GSFV, and IFLG…AVLW. EamA domains follow at residues 29–159 and 208–337; these read YAGM…MLMT and LAWA…YAVL.

It belongs to the drug/metabolite transporter (DMT) superfamily. Plant drug/metabolite exporter (P-DME) (TC 2.A.7.4) family.

It localises to the membrane. The sequence is that of WAT1-related protein At5g07050 from Arabidopsis thaliana (Mouse-ear cress).